A 298-amino-acid chain; its full sequence is Serpentine receptor class delta-34 (298 aa).

6 helical membrane-spanning segments follow: residues 10 to 30 (SSIM…FTQV), 54 to 74 (ACFF…FAIP), 99 to 119 (MILL…VITY), 158 to 178 (LATN…IVFI), 207 to 227 (LTIQ…AHLI), and 242 to 262 (VLYM…IVTI).

It belongs to the nematode receptor-like protein srd family.

The protein resides in the membrane. The chain is Serpentine receptor class delta-34 (srd-34) from Caenorhabditis elegans.